A 106-amino-acid polypeptide reads, in one-letter code: UPF0060 membrane protein Rleg2_1018 (106 aa).

Transmembrane regions (helical) follow at residues 4-24 (IIYA…WAWL), 30-50 (VWWL…LTLV), 58-78 (TFAA…WLVE), and 86-106 (DIGG…GPRG).

This sequence belongs to the UPF0060 family.

It is found in the cell inner membrane. The polypeptide is UPF0060 membrane protein Rleg2_1018 (Rhizobium leguminosarum bv. trifolii (strain WSM2304)).